The sequence spans 530 residues: Protein P80 (530 aa).

The first 22 residues, 1–22 (MKVISGLLFFILISCSLFLVQG), serve as a signal peptide directing secretion. A helical transmembrane segment spans residues 491–511 (MLVAMTFNVALFFAVIAGVLV).

Belongs to the SLC31A transporter family.

It localises to the late endosome membrane. The polypeptide is Protein P80 (p80) (Dictyostelium discoideum (Social amoeba)).